Here is an 836-residue protein sequence, read N- to C-terminus: Neuroligin-2 (836 aa).

The signal sequence occupies residues 1 to 14; the sequence is MWLLALCLVGLAGA. Residues 15 to 678 are Extracellular-facing; the sequence is QRGGGGPGGG…DSRDYSTELS (664 aa). N-linked (GlcNAc...) asparagine glycans are attached at residues N98 and N136. 3 disulfides stabilise this stretch: C106–C141, C317–C328, and C487–C521. N-linked (GlcNAc...) asparagine glycosylation occurs at N522. Positions 623-661 are disordered; the sequence is PPYATRWPPRTPGPGTSGTRRPPPPATLPPESDIDLGPR. A helical transmembrane segment spans residues 679 to 699; it reads VTVAVGASLLFLNILAFAALY. The required for interaction with LHFPL4 stretch occupies residues 679–699; sequence VTVAVGASLLFLNILAFAALY. The Cytoplasmic portion of the chain corresponds to 700 to 836; sequence YKRDRRQELR…LPHPHSTTRV (137 aa). 2 disordered regions span residues 711-735 and 791-836; these read RRLSPPGGSGSGVPGGGPLLPTAGR and LLPS…TTRV. Phosphoserine occurs at positions 714 and 719. Gly residues predominate over residues 717–728; it reads GGSGSGVPGGGP. Pro residues predominate over residues 796–819; sequence LGPPPPPPPPSLHPFGPFPPPPPT. Residues 824-836 are compositionally biased toward polar residues; sequence NNTLPHPHSTTRV.

This sequence belongs to the type-B carboxylesterase/lipase family. As to quaternary structure, interacts with neurexins NRXN1, NRXN2 and NRXN3. Interaction with neurexins is mediated by heparan sulfate glycan modification on neurexin. Interacts (via its C-terminus) with DLG4/PSD-95 (via PDZ domain 3). Interacts with PATJ. Interacts with GPHN. Interacts with MDGA1 and MDGA2. Found in a complex with MAGI2 and IGSF9B, where it interacts with MAGI2 (via WW 1, WW 2 and PDZ 2 domains). Identified in a complex of 720 kDa composed of LHFPL4, NLGN2, GABRA1, GABRB2, GABRG2 and GABRB3. Interacts with LHFPL4; leading to mutual regulation of the protein level and synaptic clustering. Interacts with GABRA1. In terms of tissue distribution, detected on hippocampus neurons, especially at inhibitory synapses. Detected in retina, in the outer and inner plexiform layer. Detected in pancreas, in islet of Langerhans beta cells (at protein level). Expressed in brain, spinal cord and dorsal root ganglion. Detected in brain, and at lower levels in pancreas islet beta cells.

Its subcellular location is the cell membrane. The protein resides in the postsynaptic cell membrane. It localises to the presynaptic cell membrane. Transmembrane scaffolding protein involved in cell-cell interactions via its interactions with neurexin family members. Mediates cell-cell interactions both in neurons and in other types of cells, such as Langerhans beta cells. Plays a role in synapse function and synaptic signal transmission, especially via gamma-aminobutyric acid receptors (GABA(A) receptors). Functions by recruiting and clustering synaptic proteins. Promotes clustering of postsynaptic GABRG2 and GPHN. Promotes clustering of postsynaptic LHFPL4. Modulates signaling by inhibitory synapses, and thereby plays a role in controlling the ratio of signaling by excitatory and inhibitory synapses and information processing. Required for normal signal amplitude from inhibitory synapses, but is not essential for normal signal frequency. May promote the initial formation of synapses, but is not essential for this. In vitro, triggers the de novo formation of presynaptic structures. Mediates cell-cell interactions between Langerhans beta cells and modulates insulin secretion. The chain is Neuroligin-2 (Nlgn2) from Rattus norvegicus (Rat).